Reading from the N-terminus, the 176-residue chain is Transcription factor 21 (176 aa).

The interval 1-84 (MSTGSISDVD…QVQRNAANAR (84 aa)) is disordered. The segment covering 31–44 (GTSNESTEDSSNCE) has biased composition (polar residues). The region spanning 76–128 (VQRNAANARERARMRVLSKAFSRLKTTLPWVPPDTKLSKLDTLRLASSYIAHL) is the bHLH domain.

In terms of assembly, efficient DNA binding requires dimerization with another bHLH protein. Expressed in the cranial paraxial mesoderm from 20 hpf and subsequently becomes restricted to the pharyngeal mesoderm that will form the muscle. Expression in the proepicardial organ is first seen at 40hpf in a cluster of cells between the myocardium and yolk. Also expressed in the developing arches. Expression begins to surround the heart by day 3 of development, and by 96 hpf, expression is restricted to the outer epicardial layer surrounding the myocardium.

It is found in the nucleus. In terms of biological role, involved in epithelial-mesenchymal interactions in kidney and lung morphogenesis that include epithelial differentiation and branching morphogenesis. This is Transcription factor 21 from Danio rerio (Zebrafish).